The following is a 482-amino-acid chain: GPI mannosyltransferase 3 (482 aa).

The chain crosses the membrane as a helical span at residues 12 to 32; it reads LFAFIFIFRLANSFAIETFFQ. Asparagine 80 is a glycosylation site (N-linked (GlcNAc...) asparagine). 4 consecutive transmembrane segments (helical) span residues 114-134, 137-155, 175-195, and 199-219; these read KLAWITLMLSLFNPFNWYVIT, FSNNLEMVFTVLALRFWPW, IIRPTNILIWIPLGIWLLISI, and LKWVALSFLEVVLILLINTAL. N-linked (GlcNAc...) asparagine glycosylation is present at asparagine 242. Helical transmembrane passes span 252-272, 274-294, and 324-344; these read WHFYIFQAIPLMLMLYLPLMI, GLKKNILLLTGLFYIIGFSLI, and FVLIGILLNICIGLFFTNVHE.

This sequence belongs to the glycosyltransferase 22 family. PIGB subfamily.

The protein resides in the endoplasmic reticulum membrane. It functions in the pathway glycolipid biosynthesis; glycosylphosphatidylinositol-anchor biosynthesis. Its function is as follows. Mannosyltransferase involved in glycosylphosphatidylinositol-anchor biosynthesis. Transfers the third mannose to Man2-GlcN-acyl-PI during GPI precursor assembly. This chain is GPI mannosyltransferase 3 (GPI10), found in Candida albicans (strain SC5314 / ATCC MYA-2876) (Yeast).